The primary structure comprises 289 residues: 4-diphosphocytidyl-2-C-methyl-D-erythritol kinase (289 aa).

Residue Lys-10 is part of the active site. 94-104 (PVAAGLAGGSS) is a binding site for ATP. Residue Asp-136 is part of the active site.

This sequence belongs to the GHMP kinase family. IspE subfamily.

The enzyme catalyses 4-CDP-2-C-methyl-D-erythritol + ATP = 4-CDP-2-C-methyl-D-erythritol 2-phosphate + ADP + H(+). It functions in the pathway isoprenoid biosynthesis; isopentenyl diphosphate biosynthesis via DXP pathway; isopentenyl diphosphate from 1-deoxy-D-xylulose 5-phosphate: step 3/6. Functionally, catalyzes the phosphorylation of the position 2 hydroxy group of 4-diphosphocytidyl-2C-methyl-D-erythritol. The protein is 4-diphosphocytidyl-2-C-methyl-D-erythritol kinase of Bacillus velezensis (strain DSM 23117 / BGSC 10A6 / LMG 26770 / FZB42) (Bacillus amyloliquefaciens subsp. plantarum).